The primary structure comprises 236 residues: Small ribosomal subunit protein uS2c (236 aa).

The protein belongs to the universal ribosomal protein uS2 family.

The protein resides in the plastid. It localises to the chloroplast. The sequence is that of Small ribosomal subunit protein uS2c (rps2) from Illicium oligandrum (Star anise).